Here is an 845-residue protein sequence, read N- to C-terminus: Disintegrin and metalloproteinase domain-containing protein 9 (845 aa).

Positions 1–29 (MGPRALSPLASLRLRWLLACGLLGPVLEA) are cleaved as a signal peptide. Over 30-697 (GRPDLEQTVH…YNAKSTALRD (668 aa)) the chain is Extracellular. N-linked (GlcNAc...) asparagine glycans are attached at residues asparagine 144, asparagine 154, and asparagine 231. The Peptidase M12B domain maps to 212-406 (RYVELFIVVD…KGGSCLLNIP (195 aa)). 4 disulfide bridges follow: cysteine 322-cysteine 401, cysteine 363-cysteine 385, cysteine 365-cysteine 370, and cysteine 473-cysteine 493. Zn(2+) is bound at residue histidine 347. Glutamate 348 is a catalytic residue. The Zn(2+) site is built by histidine 351 and histidine 357. Residues asparagine 381, asparagine 487, and asparagine 636 are each glycosylated (N-linked (GlcNAc...) asparagine). In terms of domain architecture, Disintegrin spans 414-501 (APSCGNKLVD…FCPPDVFIQN (88 aa)). 3 disulfide bridges follow: cysteine 644-cysteine 656, cysteine 650-cysteine 662, and cysteine 664-cysteine 673. The 55-residue stretch at 644 to 698 (CDIQGKCHGHGVCNSNKNCHCEDGWAPPHCDTKGYGGSVDSGPTYNAKSTALRDG) folds into the EGF-like domain. The chain crosses the membrane as a helical span at residues 698 to 718 (GLLVFFFLIVPLVAAAIFLFI). Residues 719 to 845 (KRDELRKTFR…PAPPLYSSLT (127 aa)) lie on the Cytoplasmic side of the membrane. Positions 729 to 845 (KKRSQMSDGR…PAPPLYSSLT (117 aa)) are disordered. Residues 734 to 745 (MSDGRNQANVSR) show a composition bias toward polar residues. Residues 783-794 (PGGPGVSRPPPG) are compositionally biased toward pro residues.

In terms of assembly, interacts with SH3GL2 and SNX9 through its cytoplasmic tail. Interacts with ITGA6. Requires Zn(2+) as cofactor. Post-translationally, proteolytically cleaved in the trans-Golgi network before it reaches the plasma membrane to generate a mature protein. The removal of the pro-domain occurs via cleavage at two different sites. Processed most likely by a pro-protein convertase such as furin, at the boundary between the pro-domain and the catalytic domain. An additional upstream cleavage pro-protein convertase site (Arg-56/Glu-57) has an important role in the activation of ADAM9. Phosphorylation is induced in vitro by phorbol-12-myristate-13-acetate (PMA).

It is found in the cell membrane. Its activity is regulated as follows. Synthesized as an inactive form which is proteolytically cleaved to generate an active enzyme. Processing at the upstream site is particularly important for activation of the proenzyme, whereas processing at the boundary between the pro-domain and the catalytic domain does not appear to be essential. Inhibited by hydroxamic acid-based inhibitors. Functionally, metalloprotease that cleaves and releases a number of molecules with important roles in tumorigenesis and angiogenesis, such as TEK, KDR, EPHB4, CD40, VCAM1 and CDH5. May mediate cell-cell, cell-matrix interactions and regulate the motility of cells via interactions with integrins. The sequence is that of Disintegrin and metalloproteinase domain-containing protein 9 from Mus musculus (Mouse).